Consider the following 372-residue polypeptide: Biglycan (372 aa).

The signal sequence occupies residues 1–19 (MPTMWPLWLLASLLALSQA). Positions 20-40 (LPFEQKGFWDFTLDDGLPMLN) are excised as a propeptide. O-linked (Xyl...) (glycosaminoglycan) serine glycosylation is found at Ser-45 and Ser-51. 2 cysteine pairs are disulfide-bonded: Cys-67-Cys-73 and Cys-71-Cys-80. LRR repeat units lie at residues 86 to 106 (KAVP…NNEI), 107 to 130 (SELR…NNKI), 131 to 154 (SKIH…KNHL), 155 to 175 (VEIP…DNRI), 176 to 199 (RKVP…GNPL), 200 to 224 (ENSG…EAKL), 225 to 245 (TGIP…HNKI), 246 to 269 (QAIE…HNQI), 270 to 293 (RMIE…NNKL), 294 to 316 (SRVP…TNNI), 317 to 346 (TKVG…NNPV), and 347 to 372 (PYWE…NYKK). Asn-274 and Asn-315 each carry an N-linked (GlcNAc...) asparagine glycan. Residues Cys-325 and Cys-358 are joined by a disulfide bond.

This sequence belongs to the small leucine-rich proteoglycan (SLRP) family. SLRP class I subfamily. In terms of assembly, homodimer. Forms a ternary complex with MFAP2 and ELN. Post-translationally, the two attached glycosaminoglycan chains can be either chondroitin sulfate or dermatan sulfate.

The protein resides in the secreted. It localises to the extracellular space. It is found in the extracellular matrix. In terms of biological role, may be involved in collagen fiber assembly. This Equus caballus (Horse) protein is Biglycan (BGN).